Consider the following 625-residue polypeptide: MKLFQIFPLLLSLTSVTLAADDFCNATGFQGQSVVSTGHDVKKIGNIDYEQWADGGNNSATFYSDGSFKCNFSNTKDYLCRSGVAFSQAKYPSEIGHIEAEYRLVKKSASNVGYSYVGVYGWTLQSGISGVYEYYIVDNWLSQWRPGDWVGNTKFGDFTIDGGVYTVYKNVNGNLTQYFSLRKSERTCGTIDVTAHFAQWEKLGLKMPKITEIKVLAEAGNTGGGCSGSVEIPYAKIYINGKDQDGKSKGGSSSGGSNGQGLGNGQGNGQGQGNGQGQSATGSGKCPSTITSQGYKCCSSNCDIIYRDQSGDWGVENDEWCGCGSRVPKTTNCPSSIKNQGYKCCSDSCEIVLTDSDGDWGIENDEWCGCGIKNTTPTTTTKKSNNSQPTQGQSNNNSSTNTNFCSTSKHSGQSVTETSNKVGSIGGVGYELWADSGNNSATFYSDGSFSCSFRNAKDYLCRSGLSFDSTKTYQQLGHMYADFKLVKQNIQNVDYSYVGIYGWTRNPLVEFYVVDNWLSQWRPGDWVGNKKHGDFTIDGAKYTVYENTRTGPSIDGNTTFKQYFSIRQQARDCGTIDITAHFEQWEKLGMRMGKMHEAKVLGEAGSTGSGTSGTADFPYAKVYIK.

A signal peptide spans 1–19 (MKLFQIFPLLLSLTSVTLA). A GH11 1 domain is found at 35–231 (VSTGHDVKKI…TGGGCSGSVE (197 aa)). The tract at residues 245-283 (DGKSKGGSSSGGSNGQGLGNGQGNGQGQGNGQGQSATGS) is disordered. Gly residues predominate over residues 252-276 (SSSGGSNGQGLGNGQGNGQGQGNGQ). Positions 255–279 (GGSNGQGLGNGQGNGQGQGNGQGQS) are linker. Repeat copies occupy residues 259–268 (GQGLGNGQGN) and 269–278 (GQGQGNGQGQ). Residues 259-278 (GQGLGNGQGNGQGQGNGQGQ) form a 2 X 10 AA tandem repeats of G-Q-G-[LQ]-G-N-G-Q-G-[NQ] region. CBM10 domains are found at residues 285–324 (KCPS…CGCG) and 332–371 (NCPS…CGCG). The interval 374–403 (NTTPTTTTKKSNNSQPTQGQSNNNSSTNTN) is linker. Positions 379 to 399 (TTTKKSNNSQPTQGQSNNNSS) are disordered. Residues 416-617 (TETSNKVGSI…GSGTSGTADF (202 aa)) enclose the GH11 2 domain. E510 acts as the Nucleophile in catalysis. The Proton donor role is filled by E603.

Belongs to the glycosyl hydrolase 11 (cellulase G) family.

The catalysed reaction is Endohydrolysis of (1-&gt;4)-beta-D-xylosidic linkages in xylans.. It functions in the pathway glycan degradation; xylan degradation. Hydrolyzes 1,4-beta linked polysaccharide backbones of xylans, one of the major hemicellulose components in hardwoods and softwoods. It is more active against xylopentaose than xylotetraose, has trace activity against xylotriose. The major products released from hydrolysis of xylooligosaccharides are xylobiose and xylotriose. The reiterated 40 AA domain is involved in binding the cellulase-hemicellulase complex. This is Endo-1,4-beta-xylanase A (XYNA) from Piromyces sp.